The primary structure comprises 246 residues: NAD(P)H-quinone oxidoreductase subunit K (246 aa).

The [4Fe-4S] cluster site is built by C62, C63, C127, and C158.

This sequence belongs to the complex I 20 kDa subunit family. In terms of assembly, NDH-1 can be composed of about 15 different subunits; different subcomplexes with different compositions have been identified which probably have different functions. The cofactor is [4Fe-4S] cluster.

Its subcellular location is the cellular thylakoid membrane. It catalyses the reaction a plastoquinone + NADH + (n+1) H(+)(in) = a plastoquinol + NAD(+) + n H(+)(out). The enzyme catalyses a plastoquinone + NADPH + (n+1) H(+)(in) = a plastoquinol + NADP(+) + n H(+)(out). Functionally, NDH-1 shuttles electrons from an unknown electron donor, via FMN and iron-sulfur (Fe-S) centers, to quinones in the respiratory and/or the photosynthetic chain. The immediate electron acceptor for the enzyme in this species is believed to be plastoquinone. Couples the redox reaction to proton translocation, and thus conserves the redox energy in a proton gradient. Cyanobacterial NDH-1 also plays a role in inorganic carbon-concentration. In Parasynechococcus marenigrum (strain WH8102), this protein is NAD(P)H-quinone oxidoreductase subunit K.